The sequence spans 420 residues: UDP-N-acetylglucosamine 1-carboxyvinyltransferase (420 aa).

Lys-22 to Asn-23 provides a ligand contact to phosphoenolpyruvate. Residue Arg-93 participates in UDP-N-acetyl-alpha-D-glucosamine binding. Cys-117 serves as the catalytic Proton donor. Residue Cys-117 is modified to 2-(S-cysteinyl)pyruvic acid O-phosphothioketal. UDP-N-acetyl-alpha-D-glucosamine contacts are provided by Asp-307 and Ile-329.

Belongs to the EPSP synthase family. MurA subfamily.

The protein localises to the cytoplasm. It catalyses the reaction phosphoenolpyruvate + UDP-N-acetyl-alpha-D-glucosamine = UDP-N-acetyl-3-O-(1-carboxyvinyl)-alpha-D-glucosamine + phosphate. It functions in the pathway cell wall biogenesis; peptidoglycan biosynthesis. Functionally, cell wall formation. Adds enolpyruvyl to UDP-N-acetylglucosamine. In Alcanivorax borkumensis (strain ATCC 700651 / DSM 11573 / NCIMB 13689 / SK2), this protein is UDP-N-acetylglucosamine 1-carboxyvinyltransferase.